We begin with the raw amino-acid sequence, 402 residues long: Shaggy-related protein kinase GSK2 (402 aa).

Residues 1 to 38 (MDQPAPAPEPMLLDAQPPAAVACDKKQQEGEAPYAEGN) form a disordered region. One can recognise a Protein kinase domain in the interval 63–347 (YMAERVVGTG…ALDACAHPFF (285 aa)). ATP-binding positions include 69–77 (VGTGSFGIV) and Lys-92. The active-site Proton acceptor is Asp-188.

Belongs to the protein kinase superfamily. CMGC Ser/Thr protein kinase family. GSK-3 subfamily. Interacts with DLT. Interacts with OFP8. Interacts with GRF4. Interacts with PUB24. Interacts with SMOS1. Autophosphorylated. In terms of tissue distribution, expressed in lamina joints, vascular tissue and nodes.

The protein resides in the cytoplasm. Its subcellular location is the nucleus. The enzyme catalyses L-seryl-[protein] + ATP = O-phospho-L-seryl-[protein] + ADP + H(+). It catalyses the reaction L-threonyl-[protein] + ATP = O-phospho-L-threonyl-[protein] + ADP + H(+). Functionally, serine-threonine kinase that acts as a negative regulator of brassinosteroid (BR) signaling. Phosphorylates DLT and BZR1, two positive regulators that mediates several BR responses. Phosphorylation of DLT and BZR1 inhibits their activities in BR signaling. Phosphorylates OFP8, a positive regulator of BR responses. Phosphorylated OFP8 shuttles from the nucleus to the cytoplasm where it is degraded by the proteasome. Phosphorylates the E3 ubiquitin-protein ligase PUB24, a negative regulator of BR signaling, which targets BZR1 and promotes its degradation via the 26S proteasome. Phosphorylation of PUB24 increases its stability. Phosphorylates the AP2-ERF transcription factor SMOS1, a positive regulator of BR signaling, which cooperatively functions in a transactivating complex with BZR1 to enhance the transcription of BR biosynthetic genes. Phosphorylation of SMOS1 leads to its degradation by an unknown mechanism. This Oryza sativa subsp. japonica (Rice) protein is Shaggy-related protein kinase GSK2.